The primary structure comprises 109 residues: uncharacterized protein (109 aa).

It belongs to the archaeal ATPase family.

This is an uncharacterized protein from Methanocaldococcus jannaschii (strain ATCC 43067 / DSM 2661 / JAL-1 / JCM 10045 / NBRC 100440) (Methanococcus jannaschii).